The following is a 450-amino-acid chain: Glucose-6-phosphate isomerase (450 aa).

The Proton donor role is filled by Glu291. Catalysis depends on residues His312 and Lys426.

It belongs to the GPI family.

It is found in the cytoplasm. The enzyme catalyses alpha-D-glucose 6-phosphate = beta-D-fructose 6-phosphate. Its pathway is carbohydrate biosynthesis; gluconeogenesis. It participates in carbohydrate degradation; glycolysis; D-glyceraldehyde 3-phosphate and glycerone phosphate from D-glucose: step 2/4. Catalyzes the reversible isomerization of glucose-6-phosphate to fructose-6-phosphate. The polypeptide is Glucose-6-phosphate isomerase (Clostridium novyi (strain NT)).